The sequence spans 328 residues: 2,3-diketo-L-gulonate-binding periplasmic protein YiaO (328 aa).

A signal peptide spans 1 to 24 (MKLRSVTYALFIAGLAAFSTSSLA).

In terms of assembly, the complex comprises the extracytoplasmic solute receptor protein YiaO, and the two transmembrane proteins YiaM and YiaN.

Its subcellular location is the periplasm. Its function is as follows. Part of the tripartite ATP-independent periplasmic (TRAP) transport system YiaMNO involved in the uptake of 2,3-diketo-L-gulonate. This protein specifically binds 2,3-diketo-L-gulonate. Is not able to bind either L-ascorbate or dehydroascorbate. This is 2,3-diketo-L-gulonate-binding periplasmic protein YiaO (yiaO) from Escherichia coli (strain K12).